Consider the following 347-residue polypeptide: Eukaryotic translation initiation factor 3 subunit I (347 aa).

5 WD repeats span residues 8–47 (GHER…RLGT), 50–89 (GHTG…CVAT), 149–190 (THEG…EYVD), 194–233 (LHEK…VLKK), and 291–330 (GHFG…FDFK). Ser-302 carries the post-translational modification Phosphoserine.

It belongs to the eIF-3 subunit I family. In terms of assembly, component of the eukaryotic translation initiation factor 3 (eIF-3) complex.

It localises to the cytoplasm. Component of the eukaryotic translation initiation factor 3 (eIF-3) complex, which is involved in protein synthesis of a specialized repertoire of mRNAs and, together with other initiation factors, stimulates binding of mRNA and methionyl-tRNAi to the 40S ribosome. The eIF-3 complex specifically targets and initiates translation of a subset of mRNAs involved in cell proliferation. In Saccharomyces cerevisiae (strain YJM789) (Baker's yeast), this protein is Eukaryotic translation initiation factor 3 subunit I.